Consider the following 320-residue polypeptide: Eukaryotic translation initiation factor 3 subunit G (320 aa).

Positions 1-59 (MPTGDFDSKPSWADQVEEEGEDDKCVTSELLKGIPLATGDTSPEPELLPGAPLPPPKEV) are disordered. Phosphoserine is present on residues Ser-8 and Ser-11. A phosphothreonine mark is found at Thr-38 and Thr-41. 4 positions are modified to phosphoserine: Ser-42, Ser-189, Ser-223, and Ser-264. The tract at residues 209–234 (KTGKYVPPSLRDGASRRGESMQPNRR) is disordered. The span at 221–234 (GASRRGESMQPNRR) shows a compositional bias: basic and acidic residues. An RRM domain is found at 239–317 (ATIRVTNLSE…LILNVEWAKP (79 aa)).

As to quaternary structure, component of the eukaryotic translation initiation factor 3 (eIF-3) complex, which is composed of 13 subunits: EIF3A, EIF3B, EIF3C, EIF3D, EIF3E, EIF3F, EIF3G, EIF3H, EIF3I, EIF3J, EIF3K, EIF3L and EIF3M. The eIF-3 complex appears to include 3 stable modules: module A is composed of EIF3A, EIF3B, EIF3G and EIF3I; module B is composed of EIF3F, EIF3H, and EIF3M; and module C is composed of EIF3C, EIF3D, EIF3E, EIF3K and EIF3L. EIF3C of module C binds EIF3B of module A and EIF3H of module B, thereby linking the three modules. EIF3J is a labile subunit that binds to the eIF-3 complex via EIF3B. The eIF-3 complex interacts with RPS6KB1 under conditions of nutrient depletion. Mitogenic stimulation leads to binding and activation of a complex composed of MTOR and RPTOR, leading to phosphorylation and release of RPS6KB1 and binding of EIF4B to eIF-3. Interacts (via C-terminus) with AIFM1 (via N-terminus). Interacts with DHX33; the interaction is independent of RNA. In terms of processing, phosphorylated. Phosphorylation is enhanced upon serum stimulation.

It localises to the cytoplasm. Its subcellular location is the nucleus. The protein localises to the perinuclear region. RNA-binding component of the eukaryotic translation initiation factor 3 (eIF-3) complex, which is required for several steps in the initiation of protein synthesis. The eIF-3 complex associates with the 40S ribosome and facilitates the recruitment of eIF-1, eIF-1A, eIF-2:GTP:methionyl-tRNAi and eIF-5 to form the 43S pre-initiation complex (43S PIC). The eIF-3 complex stimulates mRNA recruitment to the 43S PIC and scanning of the mRNA for AUG recognition. The eIF-3 complex is also required for disassembly and recycling of post-termination ribosomal complexes and subsequently prevents premature joining of the 40S and 60S ribosomal subunits prior to initiation. The eIF-3 complex specifically targets and initiates translation of a subset of mRNAs involved in cell proliferation, including cell cycling, differentiation and apoptosis, and uses different modes of RNA stem-loop binding to exert either translational activation or repression. This subunit can bind 18S rRNA. In terms of biological role, (Microbial infection) In case of FCV infection, plays a role in the ribosomal termination-reinitiation event leading to the translation of VP2. The chain is Eukaryotic translation initiation factor 3 subunit G from Homo sapiens (Human).